The primary structure comprises 159 residues: Ribosomal RNA large subunit methyltransferase H (159 aa).

S-adenosyl-L-methionine is bound by residues Leu-76, Gly-108, and 127 to 132; that span reads FSKMTF.

It belongs to the RNA methyltransferase RlmH family. As to quaternary structure, homodimer.

The protein resides in the cytoplasm. It catalyses the reaction pseudouridine(1915) in 23S rRNA + S-adenosyl-L-methionine = N(3)-methylpseudouridine(1915) in 23S rRNA + S-adenosyl-L-homocysteine + H(+). In terms of biological role, specifically methylates the pseudouridine at position 1915 (m3Psi1915) in 23S rRNA. The polypeptide is Ribosomal RNA large subunit methyltransferase H (Staphylococcus saprophyticus subsp. saprophyticus (strain ATCC 15305 / DSM 20229 / NCIMB 8711 / NCTC 7292 / S-41)).